The following is a 232-amino-acid chain: Phosphatidylserine decarboxylase proenzyme (232 aa).

The active-site Schiff-base intermediate with substrate; via pyruvic acid is S190. S190 is subject to Pyruvic acid (Ser); by autocatalysis.

It belongs to the phosphatidylserine decarboxylase family. PSD-A subfamily. In terms of assembly, heterodimer of a large membrane-associated beta subunit and a small pyruvoyl-containing alpha subunit. It depends on pyruvate as a cofactor. Is synthesized initially as an inactive proenzyme. Formation of the active enzyme involves a self-maturation process in which the active site pyruvoyl group is generated from an internal serine residue via an autocatalytic post-translational modification. Two non-identical subunits are generated from the proenzyme in this reaction, and the pyruvate is formed at the N-terminus of the alpha chain, which is derived from the carboxyl end of the proenzyme. The post-translation cleavage follows an unusual pathway, termed non-hydrolytic serinolysis, in which the side chain hydroxyl group of the serine supplies its oxygen atom to form the C-terminus of the beta chain, while the remainder of the serine residue undergoes an oxidative deamination to produce ammonia and the pyruvoyl prosthetic group on the alpha chain.

It localises to the cell membrane. It catalyses the reaction a 1,2-diacyl-sn-glycero-3-phospho-L-serine + H(+) = a 1,2-diacyl-sn-glycero-3-phosphoethanolamine + CO2. It participates in phospholipid metabolism; phosphatidylethanolamine biosynthesis; phosphatidylethanolamine from CDP-diacylglycerol: step 2/2. Functionally, catalyzes the formation of phosphatidylethanolamine (PtdEtn) from phosphatidylserine (PtdSer). This is Phosphatidylserine decarboxylase proenzyme from Brucella anthropi (strain ATCC 49188 / DSM 6882 / CCUG 24695 / JCM 21032 / LMG 3331 / NBRC 15819 / NCTC 12168 / Alc 37) (Ochrobactrum anthropi).